Consider the following 344-residue polypeptide: MATMYYEQNINEEVLKGKKIAIIGYGSQGHAHALNLKESGFDVVVGVRPGGSFDAAKADGVDVKTVAEAAQEADVIQILLPDERQKAVYEAEIAPHLEAGKALMFAHGFNIHFGQITPPADVDVFLVAPKGPGHLVRRQFQEGAGVPGLFAIHQDATGQAKDLALAYGKGIGAARGGLLETTFKEETETDLFGEQAVLCGGATQLVKAGFETLVEAGYQPELAYFETLHELKLIVDLMFEGGMATMRYSVSDTAEWGDYVAGPRIIDESVKARMKDVLTDIQDGTFARRWIQENENGRPEYTKFKEAGANHQIEEVGAKLREMMPFINEGKEKVVREVATSAKN.

A KARI N-terminal Rossmann domain is found at 1 to 181 (MATMYYEQNI…GAARGGLLET (181 aa)). NADP(+) is bound by residues 25-28 (YGSQ), Arg-48, Ser-52, and 82-85 (DERQ). His-107 is a catalytic residue. Gly-133 provides a ligand contact to NADP(+). A KARI C-terminal knotted domain is found at 182-327 (TFKEETETDL…AKLREMMPFI (146 aa)). Mg(2+) is bound by residues Asp-190, Glu-194, Glu-226, and Glu-230. Substrate is bound at residue Ser-251.

Belongs to the ketol-acid reductoisomerase family. Requires Mg(2+) as cofactor.

The enzyme catalyses (2R)-2,3-dihydroxy-3-methylbutanoate + NADP(+) = (2S)-2-acetolactate + NADPH + H(+). The catalysed reaction is (2R,3R)-2,3-dihydroxy-3-methylpentanoate + NADP(+) = (S)-2-ethyl-2-hydroxy-3-oxobutanoate + NADPH + H(+). The protein operates within amino-acid biosynthesis; L-isoleucine biosynthesis; L-isoleucine from 2-oxobutanoate: step 2/4. It functions in the pathway amino-acid biosynthesis; L-valine biosynthesis; L-valine from pyruvate: step 2/4. Involved in the biosynthesis of branched-chain amino acids (BCAA). Catalyzes an alkyl-migration followed by a ketol-acid reduction of (S)-2-acetolactate (S2AL) to yield (R)-2,3-dihydroxy-isovalerate. In the isomerase reaction, S2AL is rearranged via a Mg-dependent methyl migration to produce 3-hydroxy-3-methyl-2-ketobutyrate (HMKB). In the reductase reaction, this 2-ketoacid undergoes a metal-dependent reduction by NADPH to yield (R)-2,3-dihydroxy-isovalerate. In Lysinibacillus sphaericus (strain C3-41), this protein is Ketol-acid reductoisomerase (NADP(+)).